A 471-amino-acid chain; its full sequence is Sulfate adenylyltransferase subunit 1 (471 aa).

One can recognise a tr-type G domain in the interval Lys-22–Lys-237. The segment at Gly-31 to Ser-38 is G1. Residue Gly-31–Ser-38 coordinates GTP. A G2 region spans residues Gly-89–Asp-93. The tract at residues Asp-110–Gly-113 is G3. GTP contacts are provided by residues Asp-110–His-114 and Asn-165–Asp-168. Residues Asn-165–Asp-168 are G4. A G5 region spans residues Ser-202–Leu-204.

Belongs to the TRAFAC class translation factor GTPase superfamily. Classic translation factor GTPase family. CysN/NodQ subfamily. As to quaternary structure, heterodimer composed of CysD, the smaller subunit, and CysN.

It catalyses the reaction sulfate + ATP + H(+) = adenosine 5'-phosphosulfate + diphosphate. Its pathway is sulfur metabolism; hydrogen sulfide biosynthesis; sulfite from sulfate: step 1/3. In terms of biological role, with CysD forms the ATP sulfurylase (ATPS) that catalyzes the adenylation of sulfate producing adenosine 5'-phosphosulfate (APS) and diphosphate, the first enzymatic step in sulfur assimilation pathway. APS synthesis involves the formation of a high-energy phosphoric-sulfuric acid anhydride bond driven by GTP hydrolysis by CysN coupled to ATP hydrolysis by CysD. The sequence is that of Sulfate adenylyltransferase subunit 1 from Saccharophagus degradans (strain 2-40 / ATCC 43961 / DSM 17024).